The sequence spans 494 residues: Ribose import ATP-binding protein RbsA (494 aa).

ABC transporter domains follow at residues 2–239 (IDMR…VGRQ) and 251–493 (IGEE…TGGN). 34-41 (GENGAGKS) contributes to the ATP binding site.

This sequence belongs to the ABC transporter superfamily. Ribose importer (TC 3.A.1.2.1) family. The complex is composed of an ATP-binding protein (RbsA), two transmembrane proteins (RbsC) and a solute-binding protein (RbsB).

The protein localises to the cell membrane. It carries out the reaction D-ribose(out) + ATP + H2O = D-ribose(in) + ADP + phosphate + H(+). Functionally, part of the ABC transporter complex RbsABC involved in ribose import. Responsible for energy coupling to the transport system. The chain is Ribose import ATP-binding protein RbsA from Geobacillus kaustophilus (strain HTA426).